Reading from the N-terminus, the 186-residue chain is ATP synthase subunit delta (186 aa).

The protein belongs to the ATPase delta chain family. As to quaternary structure, F-type ATPases have 2 components, F(1) - the catalytic core - and F(0) - the membrane proton channel. F(1) has five subunits: alpha(3), beta(3), gamma(1), delta(1), epsilon(1). F(0) has three main subunits: a(1), b(2) and c(10-14). The alpha and beta chains form an alternating ring which encloses part of the gamma chain. F(1) is attached to F(0) by a central stalk formed by the gamma and epsilon chains, while a peripheral stalk is formed by the delta and b chains.

The protein localises to the cell membrane. F(1)F(0) ATP synthase produces ATP from ADP in the presence of a proton or sodium gradient. F-type ATPases consist of two structural domains, F(1) containing the extramembraneous catalytic core and F(0) containing the membrane proton channel, linked together by a central stalk and a peripheral stalk. During catalysis, ATP synthesis in the catalytic domain of F(1) is coupled via a rotary mechanism of the central stalk subunits to proton translocation. In terms of biological role, this protein is part of the stalk that links CF(0) to CF(1). It either transmits conformational changes from CF(0) to CF(1) or is implicated in proton conduction. This chain is ATP synthase subunit delta, found in Mycoplasmopsis agalactiae (strain NCTC 10123 / CIP 59.7 / PG2) (Mycoplasma agalactiae).